A 200-amino-acid chain; its full sequence is MEPFKTHTGVGVPLRRSNVDTDQIIPAVYLKRVSRTGFEDALFAAWRADDDFILNNPHFRNGSVLVAGPDFGTGSSREHAVWALKDYGFRVVISSRFADIFRGNSGKQGLLAARCEQSDVELLWKVLETEPGTSVTVDLEARTVHAKDLTVPFEIDDYTRWRLLEGLDDIGLTLRQAETIDTFEKTRPSFKPATLPARAG.

Belongs to the LeuD family. LeuD type 1 subfamily. As to quaternary structure, heterodimer of LeuC and LeuD.

It catalyses the reaction (2R,3S)-3-isopropylmalate = (2S)-2-isopropylmalate. It participates in amino-acid biosynthesis; L-leucine biosynthesis; L-leucine from 3-methyl-2-oxobutanoate: step 2/4. Its function is as follows. Catalyzes the isomerization between 2-isopropylmalate and 3-isopropylmalate, via the formation of 2-isopropylmaleate. This is 3-isopropylmalate dehydratase small subunit from Saccharopolyspora erythraea (strain ATCC 11635 / DSM 40517 / JCM 4748 / NBRC 13426 / NCIMB 8594 / NRRL 2338).